A 497-amino-acid chain; its full sequence is Cobyric acid synthase (497 aa).

The 175-residue stretch at 257–431 folds into the GATase cobBQ-type domain; sequence WLRVAAVRLP…WHGLLDNDDF (175 aa). Residue Cys-338 is the Nucleophile of the active site. Residue His-423 is part of the active site.

This sequence belongs to the CobB/CobQ family. CobQ subfamily.

It functions in the pathway cofactor biosynthesis; adenosylcobalamin biosynthesis. Functionally, catalyzes amidations at positions B, D, E, and G on adenosylcobyrinic A,C-diamide. NH(2) groups are provided by glutamine, and one molecule of ATP is hydrogenolyzed for each amidation. This is Cobyric acid synthase from Mycolicibacterium paratuberculosis (strain ATCC BAA-968 / K-10) (Mycobacterium paratuberculosis).